The sequence spans 163 residues: Ribosome maturation factor RimP (163 aa).

This sequence belongs to the RimP family.

The protein localises to the cytoplasm. Required for maturation of 30S ribosomal subunits. The protein is Ribosome maturation factor RimP of Polynucleobacter necessarius subsp. necessarius (strain STIR1).